Reading from the N-terminus, the 1366-residue chain is ABC multidrug transporter MDR2 (1366 aa).

The chain crosses the membrane as a helical span at residues 52–72; that stretch reads IALIVIGTIAGIGAGIPFPLL. In terms of domain architecture, ABC transmembrane type-1 1 spans 56-354; that stretch reads VIGTIAGIGA…MAPFMHIFAS (299 aa). A glycan (N-linked (GlcNAc...) asparagine) is linked at N84. Transmembrane regions (helical) follow at residues 106–126, 180–200, 202–222, 288–308, and 323–343; these read VLQVIYASILNFVCMYIHTGC, KVGLFIGTISYFVAAYIVAFL, VATIAAMLMSVVPIYFLMAFG, IQFGMLYFVAYASNALAFWQG, and VSVGAVYTVIFVLLDASFVLS. The ABC transporter 1 domain maps to 390-669; the sequence is IELQDVTFNY…DGVYAGMVRL (280 aa). 425–432 provides a ligand contact to ATP; sequence GTSGSGKS. N620 is a glycosylation site (N-linked (GlcNAc...) asparagine). Residues 727–746 form a disordered region; the sequence is PEEADSLPTEPEAKKEKPKQ. The next 4 membrane-spanning stretches (helical) occupy residues 768-788, 807-827, 868-888, and 898-918; these read LGLITSIMIGVSYTGEAVIFG, GMLFGLLFFILAVAKFAAVIV, LLVALVTSDASALSSLTGTTI, and LFAGVILSHVIAWKIAVVLLA. An ABC transmembrane type-1 2 domain is found at 768-1055; it reads LGLITSIMIG…MFALVPDISK (288 aa). N976 carries N-linked (GlcNAc...) asparagine glycosylation. Transmembrane regions (helical) follow at residues 995–1015 and 1019–1039; these read FWLSLAYSISTLVYALAYWWG and ILAGMYTQVQFFIVLPALLFS. Positions 1122-1361 constitute an ABC transporter 2 domain; it reads VQFRNVHFRY…CESYRANVIH (240 aa). Position 1157 to 1164 (1157 to 1164) interacts with ATP; the sequence is GPSGSGKS.

It belongs to the ABC transporter superfamily. ABCB family. Multidrug resistance exporter (TC 3.A.1.201) subfamily.

It localises to the cell membrane. Its function is as follows. Pleiotropic ABC efflux transporter that may be involved in the modulation susceptibility to a wide range of unrelated cytotoxic compounds. Does not act as an efflux pump for azoles, including fluconazole, itraconazole, ketoconazole, miconazole and voriconazole, nor does it modulate susceptibility to cycloheximide. The chain is ABC multidrug transporter MDR2 from Trichophyton rubrum (strain ATCC MYA-4607 / CBS 118892) (Athlete's foot fungus).